The following is a 163-amino-acid chain: Nucleotide-binding protein YajQ (163 aa).

Belongs to the YajQ family.

Nucleotide-binding protein. The protein is Nucleotide-binding protein YajQ of Salmonella paratyphi A (strain ATCC 9150 / SARB42).